Reading from the N-terminus, the 66-residue chain is Large ribosomal subunit protein bL35 (66 aa).

It belongs to the bacterial ribosomal protein bL35 family.

The polypeptide is Large ribosomal subunit protein bL35 (Caulobacter vibrioides (strain ATCC 19089 / CIP 103742 / CB 15) (Caulobacter crescentus)).